A 464-amino-acid polypeptide reads, in one-letter code: ATP synthase subunit beta (464 aa).

ATP is bound at residue 153-160 (GGAGVGKT).

It belongs to the ATPase alpha/beta chains family. In terms of assembly, F-type ATPases have 2 components, CF(1) - the catalytic core - and CF(0) - the membrane proton channel. CF(1) has five subunits: alpha(3), beta(3), gamma(1), delta(1), epsilon(1). CF(0) has three main subunits: a(1), b(2) and c(9-12). The alpha and beta chains form an alternating ring which encloses part of the gamma chain. CF(1) is attached to CF(0) by a central stalk formed by the gamma and epsilon chains, while a peripheral stalk is formed by the delta and b chains.

The protein resides in the cell membrane. The enzyme catalyses ATP + H2O + 4 H(+)(in) = ADP + phosphate + 5 H(+)(out). In terms of biological role, produces ATP from ADP in the presence of a proton gradient across the membrane. The catalytic sites are hosted primarily by the beta subunits. The sequence is that of ATP synthase subunit beta from Clostridium novyi (strain NT).